Consider the following 52-residue polypeptide: Large ribosomal subunit protein bL33 (52 aa).

The protein belongs to the bacterial ribosomal protein bL33 family.

This Helicobacter acinonychis (strain Sheeba) protein is Large ribosomal subunit protein bL33.